The chain runs to 303 residues: Coenzyme PQQ synthesis protein B (303 aa).

Belongs to the PqqB family.

It participates in cofactor biosynthesis; pyrroloquinoline quinone biosynthesis. In terms of biological role, may be involved in the transport of PQQ or its precursor to the periplasm. In Rhizobium meliloti (strain 1021) (Ensifer meliloti), this protein is Coenzyme PQQ synthesis protein B.